The chain runs to 404 residues: MNTKSIVFNADNDYVDKLETAIKSICCYNNCLKFYVFNDDIASEWFLMMNKRLKTIQSEIVNVKIVDHVLKKFHLPLKNLSYATFFRYFIPNFVKESRALYLDSDIIVTGSLDYLFDIELDGYALAAVEDSFGDVPSTNFNSGMLLVNVDTWRDEDACSKLLELTNQYHETAYGDQGILNMLFHDRWKRLDRNFNFMVGMDSVAHIEGNHKWYEISELKNGDLPSVIHYTGVKPWEIISNNRFREVWWFYNLLEWSDILLRKDIISRSFEELVYSPKAHTAIFTASCEMEHVEYLIENLPEVHFSILAHTYFASSVVALLRYSNVTIYPCFSPFDYRKILDNLDFYLDINHYKEVDNIVSVVQQLSKPIFTFENTSHDIGNQTNIFSSTEPNKMVEAIRQFIGE.

Residues 1-267 (MNTKSIVFNA…ILLRKDIISR (267 aa)) form a GT8 domain region. UDP contacts are provided by residues 9–14 (NADNDY) and 103–104 (DS). Mn(2+) contacts are provided by D103, D105, and H228. 228–233 (HYTGVK) contributes to the UDP binding site.

In the N-terminal section; belongs to the glycosyltransferase 8 family.

May be involved in the polymorphic O-glycosylation of the serine-rich repeat protein PsrP. Has equal hydrolytic activity against both UDP-galactose and UDP-glucose; no glycosyltransferase activity has been seen with tested substrates. The chain is Glycosyltransferase GlyB from Streptococcus pneumoniae serotype 4 (strain ATCC BAA-334 / TIGR4).